We begin with the raw amino-acid sequence, 959 residues long: MMS19 nucleotide excision repair protein (959 aa).

4 HEAT repeats span residues 794-828, 832-871, 874-915, and 918-956; these read QKLF…ATPQ, KLNI…QQDT, QGHL…YPTF, and LPHK…VGAP.

The protein belongs to the MET18/MMS19 family. In terms of assembly, component of the CIA complex. Interacts with Xpd and galla-2. Binds to microtubules. Expressed in embryos (at protein level).

It is found in the cytoplasm. The protein localises to the cytoskeleton. The protein resides in the spindle. Its subcellular location is the nucleus. It localises to the midbody. Key component of the cytosolic iron-sulfur protein assembly (CIA) complex, a multiprotein complex that mediates the incorporation of iron-sulfur cluster into apoproteins specifically involved in DNA metabolism and genomic integrity. In the CIA complex, MMS19 acts as an adapter between early-acting CIA components and a subset of cellular target iron-sulfur proteins. Essential for diploid cell cycles, organ growth and development. Regulates mitosis by binding to Xpd and thereby competing with the Xpd-mediated repression on the Cdk-activating kinase (CAK) complex. Regulates the centrosomal localization of the MT regulator tacc, a downstream target of aurA kinase. Binds to microtubules (MT). Regulates spindle and astral MT growth, MT stability and bundling. In neuroblasts, necessary for timely and coordinated spindle assembly and orientation which is necessary for mitotic progression. In young embryos, the maternal protein is important for progression through mitosis. This is MMS19 nucleotide excision repair protein from Drosophila melanogaster (Fruit fly).